Here is a 357-residue protein sequence, read N- to C-terminus: 3-dehydroquinate synthase (357 aa).

Residues 69–74 (DGEKNK), 103–107 (GVIGD), 127–128 (TT), lysine 140, and lysine 149 contribute to the NAD(+) site. Glutamate 182, histidine 245, and histidine 262 together coordinate Zn(2+).

This sequence belongs to the sugar phosphate cyclases superfamily. Dehydroquinate synthase family. Co(2+) is required as a cofactor. The cofactor is Zn(2+). It depends on NAD(+) as a cofactor.

The protein resides in the cytoplasm. The catalysed reaction is 7-phospho-2-dehydro-3-deoxy-D-arabino-heptonate = 3-dehydroquinate + phosphate. It functions in the pathway metabolic intermediate biosynthesis; chorismate biosynthesis; chorismate from D-erythrose 4-phosphate and phosphoenolpyruvate: step 2/7. In terms of biological role, catalyzes the conversion of 3-deoxy-D-arabino-heptulosonate 7-phosphate (DAHP) to dehydroquinate (DHQ). In Shewanella denitrificans (strain OS217 / ATCC BAA-1090 / DSM 15013), this protein is 3-dehydroquinate synthase.